The following is a 450-amino-acid chain: Phosphoglucosamine mutase (450 aa).

The active-site Phosphoserine intermediate is serine 101. Residues serine 101, aspartate 240, aspartate 242, and aspartate 244 each coordinate Mg(2+). Serine 101 is subject to Phosphoserine.

Belongs to the phosphohexose mutase family. It depends on Mg(2+) as a cofactor. In terms of processing, activated by phosphorylation.

The enzyme catalyses alpha-D-glucosamine 1-phosphate = D-glucosamine 6-phosphate. Its function is as follows. Catalyzes the conversion of glucosamine-6-phosphate to glucosamine-1-phosphate. This is Phosphoglucosamine mutase from Streptococcus equi subsp. zooepidemicus (strain MGCS10565).